We begin with the raw amino-acid sequence, 275 residues long: Adenylate kinase (275 aa).

ATP is bound at residue 54–59 (GAGKGT). The tract at residues 74–103 (ATGDMLRSQVAKKTPLGREAKKIMDQGGLV) is NMP. AMP is bound by residues threonine 75, arginine 80, 101 to 103 (GLV), 130 to 133 (GFPR), and glutamine 137. Residues 171–208 (GRLVHPASGRSYHRVFNPPKAEMKDDITGEPLVSRSDD) are LID. Residues arginine 172 and 181-182 (SY) each bind ATP. Arginine 205 and arginine 216 together coordinate AMP. Glutamine 244 is a binding site for ATP.

Belongs to the adenylate kinase family. AK2 subfamily. In terms of assembly, monomer.

It localises to the cytoplasm. Its subcellular location is the cytosol. The protein localises to the mitochondrion intermembrane space. The catalysed reaction is AMP + ATP = 2 ADP. Catalyzes the reversible transfer of the terminal phosphate group between ATP and AMP. Plays an important role in cellular energy homeostasis and in adenine nucleotide metabolism. Adenylate kinase activity is critical for regulation of the phosphate utilization and the AMP de novo biosynthesis pathways. This Sclerotinia sclerotiorum (strain ATCC 18683 / 1980 / Ss-1) (White mold) protein is Adenylate kinase (adk1).